Here is a 389-residue protein sequence, read N- to C-terminus: Metal tolerance protein 2 (389 aa).

The Cytoplasmic segment spans residues 1-81 (MGFRLAHLAA…GGEASERIFR (81 aa)). A helical membrane pass occupies residues 82–102 (LGLAADVVLTVGKAVTGYLSG). Residues 103–104 (ST) lie on the Vacuolar side of the membrane. A helical transmembrane segment spans residues 105-125 (AIAADAAHSLSDIVLSGVALL). The Cytoplasmic portion of the chain corresponds to 126 to 148 (SYKAAKAPRDKEHPYGHGKFESL). Residues 149–169 (GALGISSMLLVTAGGIAWHAF) form a helical membrane-spanning segment. Over 170–206 (DVLQGVMSSAPDIIGNVSHAHHSHGSSGHHHGIDLEH) the chain is Vacuolar. Residues 207 to 227 (PILALSVTAFAISVKEGLYWI) form a helical membrane-spanning segment. Residues 228-250 (TKRAGEKEGSGLMKANAWHHRSD) are Cytoplasmic-facing. Residues 251 to 271 (AISSVVALLGVGGSILGVPYL) traverse the membrane as a helical segment. The Vacuolar segment spans residues 272-275 (DPLA). A helical membrane pass occupies residues 276-296 (GLVVSGMILKAGVHTGYESVL). The Cytoplasmic segment spans residues 297-389 (ELVDAAVDPS…SLQPLNQNAL (93 aa)).

Belongs to the cation diffusion facilitator (CDF) transporter (TC 2.A.4) family. SLC30A subfamily.

The protein resides in the vacuole membrane. Its function is as follows. Involved in sequestration of excess metal in the cytoplasm into vacuoles to maintain metal homeostasis. This is Metal tolerance protein 2 (MTP2) from Oryza sativa subsp. japonica (Rice).